The chain runs to 184 residues: Endoribonuclease YbeY (184 aa).

The Zn(2+) site is built by His-151, His-155, and His-161.

This sequence belongs to the endoribonuclease YbeY family. It depends on Zn(2+) as a cofactor.

It localises to the cytoplasm. Single strand-specific metallo-endoribonuclease involved in late-stage 70S ribosome quality control and in maturation of the 3' terminus of the 16S rRNA. The sequence is that of Endoribonuclease YbeY from Prochlorococcus marinus (strain NATL2A).